We begin with the raw amino-acid sequence, 607 residues long: Elongation factor 4 (607 aa).

The region spanning 11 to 193 (EKIRNFSIIA…QIVEKVPAPQ (183 aa)) is the tr-type G domain. Residues 23–28 (DHGKST) and 140–143 (NKID) contribute to the GTP site.

It belongs to the TRAFAC class translation factor GTPase superfamily. Classic translation factor GTPase family. LepA subfamily.

The protein localises to the cell membrane. The enzyme catalyses GTP + H2O = GDP + phosphate + H(+). In terms of biological role, required for accurate and efficient protein synthesis under certain stress conditions. May act as a fidelity factor of the translation reaction, by catalyzing a one-codon backward translocation of tRNAs on improperly translocated ribosomes. Back-translocation proceeds from a post-translocation (POST) complex to a pre-translocation (PRE) complex, thus giving elongation factor G a second chance to translocate the tRNAs correctly. Binds to ribosomes in a GTP-dependent manner. The sequence is that of Elongation factor 4 from Lactococcus lactis subsp. cremoris (strain MG1363).